We begin with the raw amino-acid sequence, 349 residues long: N-acetyltaurine hydrolase (349 aa).

A divalent metal cation is bound by residues histidine 26, histidine 28, glutamate 169, histidine 201, histidine 230, and aspartate 298.

This sequence belongs to the metallo-dependent hydrolases superfamily. Phosphotriesterase family. A divalent metal cation serves as cofactor.

It localises to the cytoplasm. Its subcellular location is the cytosol. It carries out the reaction N-acetyltaurine + H2O = taurine + acetate. The catalysed reaction is N-propanoyltaurine + H2O = propanoate + taurine. The enzyme catalyses N-acetyl-L-methionine + H2O = L-methionine + acetate. It catalyses the reaction N-acetyl-L-isoleucine + H2O = L-isoleucine + acetate. It carries out the reaction N-acetyl-L-leucine + H2O = L-leucine + acetate. The catalysed reaction is N-acetyl-L-valine + H2O = L-valine + acetate. In terms of biological role, N-acetyltaurine hydrolase that catalyzes the hydrolysis of N-acetyltaurine into taurine and acetate. PTER also acts on other N-acetyl amino acids (Met, Ile, Leu, Val) and N-propionyltaurine, but at lower rates. The protein is N-acetyltaurine hydrolase (pter) of Danio rerio (Zebrafish).